The sequence spans 225 residues: Leucyl/phenylalanyl-tRNA--protein transferase (225 aa).

The protein belongs to the L/F-transferase family.

It is found in the cytoplasm. It catalyses the reaction N-terminal L-lysyl-[protein] + L-leucyl-tRNA(Leu) = N-terminal L-leucyl-L-lysyl-[protein] + tRNA(Leu) + H(+). It carries out the reaction N-terminal L-arginyl-[protein] + L-leucyl-tRNA(Leu) = N-terminal L-leucyl-L-arginyl-[protein] + tRNA(Leu) + H(+). The enzyme catalyses L-phenylalanyl-tRNA(Phe) + an N-terminal L-alpha-aminoacyl-[protein] = an N-terminal L-phenylalanyl-L-alpha-aminoacyl-[protein] + tRNA(Phe). Functionally, functions in the N-end rule pathway of protein degradation where it conjugates Leu, Phe and, less efficiently, Met from aminoacyl-tRNAs to the N-termini of proteins containing an N-terminal arginine or lysine. The protein is Leucyl/phenylalanyl-tRNA--protein transferase of Nitrobacter winogradskyi (strain ATCC 25391 / DSM 10237 / CIP 104748 / NCIMB 11846 / Nb-255).